A 697-amino-acid polypeptide reads, in one-letter code: Elongation factor G (697 aa).

Residues 8-287 (ERVRNIGIAA…AVVDYLPAPT (280 aa)) form the tr-type G domain. GTP is bound by residues 17–24 (AHIDAGKT), 81–85 (DTPGH), and 135–138 (NKMD).

This sequence belongs to the TRAFAC class translation factor GTPase superfamily. Classic translation factor GTPase family. EF-G/EF-2 subfamily.

It localises to the cytoplasm. In terms of biological role, catalyzes the GTP-dependent ribosomal translocation step during translation elongation. During this step, the ribosome changes from the pre-translocational (PRE) to the post-translocational (POST) state as the newly formed A-site-bound peptidyl-tRNA and P-site-bound deacylated tRNA move to the P and E sites, respectively. Catalyzes the coordinated movement of the two tRNA molecules, the mRNA and conformational changes in the ribosome. This Arthrospira platensis (Spirulina platensis) protein is Elongation factor G (fusA).